The following is a 312-amino-acid chain: Aquaporin Lacbi1:391485 (312 aa).

Over 1–50 (MDDKFDDDALPNSKTTPEDYGDKLAEYDYTNTFPNTWMRLREPFREYIAE) the chain is Cytoplasmic. The chain crosses the membrane as a helical span at residues 51 to 71 (FVGVAVLIIFGVGADCQVVLS). Residues 72 to 89 (ANTGVAPSPKGDYLSLNC) are Extracellular-facing. A helical transmembrane segment spans residues 90–110 (GWAIGTAMGVWISGGISGGHI). An NPA 1 motif is present at residues 111-113 (NPA). Residues 111–128 (NPAVTLALMAWRGFPWWK) lie on the Cytoplasmic side of the membrane. Residues 129-149 (VPGFIFAQLLGGIVGAGLVYV) traverse the membrane as a helical segment. Over 150 to 183 (NYIHAIDIVEGGRHIRTLDTAGLFATYAADYMTN) the chain is Extracellular. N-linked (GlcNAc...) asparagine glycosylation occurs at Asn-183. A helical transmembrane segment spans residues 184–204 (VSCFFSEFLATAVLIVVIHAM). The Cytoplasmic portion of the chain corresponds to 205–213 (NDKRNAPPP). Residues 214 to 234 (AGLAPLVLFFLILGIGASLGM) traverse the membrane as a helical segment. Topologically, residues 235–267 (ETGYAINPARDLGPRMLTAMVGYGRQVFAFRNQ) are extracellular. The short motif at 241–243 (NPA) is the NPA 2 element. A helical membrane pass occupies residues 268–288 (YWIWCPVIAPFLGAQVGTIFY). Residues 289 to 312 (DLFFYKGQDNVFGRLGSHIHISPA) are Cytoplasmic-facing.

It belongs to the MIP/aquaporin (TC 1.A.8) family.

It is found in the membrane. The catalysed reaction is H2O(in) = H2O(out). It carries out the reaction glycerol(in) = glycerol(out). It catalyses the reaction NH4(+)(in) = NH4(+)(out). In terms of biological role, water channel required to facilitate the transport of water across membranes. In addition to water, also shows strong glycerol and ammonium transport activities. May be involved in fungal nitrogen (ammonium) support of the plant host in symbiosis. Glycerol accumulation has never been observed in ectomycorrhizal (ECM) fungi, therefore, glycerol permeability of Lacbi1:391485 might be a relict of the affiliation of the protein to the group of aquaglyceroporins, and other osmotic active compounds (e.g. trehalose or mannitol) may have taken over glycerol function in ECM fungi. This is Aquaporin Lacbi1:391485 from Laccaria bicolor (strain S238N-H82 / ATCC MYA-4686) (Bicoloured deceiver).